A 362-amino-acid polypeptide reads, in one-letter code: MKFLDEAKVYIRSGDGGAGSVSFRREKFIEFGGPDGGDGGRGGDVWVETVNGLNTLIDFRYQQHFKATIGTHGMGRNRTGANGSDVTLKVPVGTQIFEEDRETLICDLTVEGQRYCLAHGGNGGFGNAHFKTSTNQAPDWANPGLPGEEKTIWLRLKLIADAGLVGLPNAGKSTFLASVTRARPKIANYPFTTLHPNLGVATIDEREFILADIPGLIEGAHEGVGIGDRFLGHVERTRVLLHLVSAQEEKVGKAYKTVKHELEAYGNDLTDKPEIVALSQIDVLDEAELKKKTKELAKACGKTPFQISAVTGRGMTEVLRALRDVIVEENAEEKPAKVPKLRHRDMIVSDEGEGEDGADDQP.

The Obg domain maps to methionine 1–isoleucine 159. One can recognise an OBG-type G domain in the interval alanine 160 to valine 327. Residues glycine 166–serine 173, phenylalanine 191–histidine 195, aspartate 212–glycine 215, serine 279–aspartate 282, and serine 308–valine 310 contribute to the GTP site. Serine 173 and threonine 193 together coordinate Mg(2+). The interval glutamate 332–proline 362 is disordered. Acidic residues predominate over residues valine 348 to proline 362.

Belongs to the TRAFAC class OBG-HflX-like GTPase superfamily. OBG GTPase family. Monomer. It depends on Mg(2+) as a cofactor.

It is found in the cytoplasm. In terms of biological role, an essential GTPase which binds GTP, GDP and possibly (p)ppGpp with moderate affinity, with high nucleotide exchange rates and a fairly low GTP hydrolysis rate. Plays a role in control of the cell cycle, stress response, ribosome biogenesis and in those bacteria that undergo differentiation, in morphogenesis control. The sequence is that of GTPase Obg from Rhizobium etli (strain CIAT 652).